A 351-amino-acid chain; its full sequence is Cytochrome c biogenesis protein CcsA (351 aa).

Transmembrane regions (helical) follow at residues 12–32, 37–57, 68–88, 97–117, 143–163, 259–279, 294–314, and 320–340; these read NISFGILFATMLIYWLGAAFP, LSILGSTGMAIANLCIATLLG, ISNLYESLFFLTWGITTIHLI, LVGVFTSPIAMGISAFAALTL, MMLSYATLIVGALLAIAFLII, IIGLGFPLLTIGIIAGAVWAN, WALITWLVFAAYLHARITKGW, and AILAATGFAVVWVCYLGVNLL.

Belongs to the CcmF/CycK/Ccl1/NrfE/CcsA family. As to quaternary structure, may interact with ccs1.

Its subcellular location is the cellular thylakoid membrane. Functionally, required during biogenesis of c-type cytochromes (cytochrome c6 and cytochrome f) at the step of heme attachment. This chain is Cytochrome c biogenesis protein CcsA, found in Trichodesmium erythraeum (strain IMS101).